Consider the following 118-residue polypeptide: Ribonuclease P protein component (118 aa).

The protein belongs to the RnpA family. Consists of a catalytic RNA component (M1 or rnpB) and a protein subunit.

It carries out the reaction Endonucleolytic cleavage of RNA, removing 5'-extranucleotides from tRNA precursor.. RNaseP catalyzes the removal of the 5'-leader sequence from pre-tRNA to produce the mature 5'-terminus. It can also cleave other RNA substrates such as 4.5S RNA. The protein component plays an auxiliary but essential role in vivo by binding to the 5'-leader sequence and broadening the substrate specificity of the ribozyme. The protein is Ribonuclease P protein component of Ureaplasma urealyticum serovar 10 (strain ATCC 33699 / Western).